We begin with the raw amino-acid sequence, 134 residues long: MKAFSPVRSVRKNSLSDHSLGISRSKTPVDDPMSLLYNMNDCYSKLKELVPSIPQNKKVSKMEILQHVIDYILDLQIALDSHPTIVSLHHQRPGQNQASRTPLTTLNTDISILSLQASEFPSELMSNDSKALCG.

A phosphoserine mark is found at S14 and S25. Residues 23 to 75 (SRSKTPVDDPMSLLYNMNDCYSKLKELVPSIPQNKKVSKMEILQHVIDYILDL) form the bHLH domain. The Nuclear export signal motif lies at 106 to 115 (LNTDISILSL).

In terms of assembly, interacts with GATA4 and NKX2-5. Interacts with NR0B2. Interacts with CLOCK and BMAL1. Interacts with IFI204. Interacts with NEDD9/HEF1. Interacts with ASB4; this interaction promotes ID2 proteasomal degradation. In terms of processing, ubiquitinated in a ASB4-depedent manner, leading to proteasomal degradation. Phosphorylated in vitro by CDK1, PKA and PKC. As to expression, highly expressed in early fetal tissues, including those of the central nervous system.

The protein localises to the cytoplasm. It is found in the nucleus. In terms of biological role, transcriptional regulator (lacking a basic DNA binding domain) which negatively regulates the basic helix-loop-helix (bHLH) transcription factors by forming heterodimers and inhibiting their DNA binding and transcriptional activity. Implicated in regulating a variety of cellular processes, including cellular growth, senescence, differentiation, apoptosis, angiogenesis, and neoplastic transformation. Inhibits skeletal muscle and cardiac myocyte differentiation. Regulates the circadian clock by repressing the transcriptional activator activity of the CLOCK-BMAL1 heterodimer. Restricts the CLOCK and BMAL1 localization to the cytoplasm. Plays a role in both the input and output pathways of the circadian clock: in the input component, is involved in modulating the magnitude of photic entrainment and in the output component, contributes to the regulation of a variety of liver clock-controlled genes involved in lipid metabolism. In Homo sapiens (Human), this protein is DNA-binding protein inhibitor ID-2 (ID2).